The primary structure comprises 316 residues: Protein lifeguard 2 (316 aa).

The interval 1–53 is disordered; that stretch reads MTQGKLSVANKAPGTEGQQQVHGEKKEAPAVPSAPPSYEEATSGEGMKAGAFP. 3 helical membrane passes run 106–126, 138–158, and 165–185; these read VYTI…LFTF, PGWY…LACC, and FPWN…LTGM. Asparagine 191 carries an N-linked (GlcNAc...) asparagine glycan. The next 4 membrane-spanning stretches (helical) occupy residues 194-214, 225-245, 250-270, and 290-310; these read SVLL…VFSF, GVLF…AILL, VPWL…LFLA, and IFGA…FLQL.

It belongs to the BI1 family. LFG subfamily. In terms of assembly, interacts with FAS/TNFRSF6 and BAX.

The protein localises to the cell membrane. It localises to the membrane raft. It is found in the postsynaptic cell membrane. Functionally, antiapoptotic protein which protects cells uniquely from Fas-induced apoptosis. Regulates Fas-mediated apoptosis in neurons by interfering with caspase-8 activation. Plays a role in cerebellar development by affecting cerebellar size, internal granular layer (IGL) thickness, and Purkinje cell (PC) development. This is Protein lifeguard 2 (FAIM2) from Pongo abelii (Sumatran orangutan).